We begin with the raw amino-acid sequence, 483 residues long: Protein nucleotidyltransferase YdiU (483 aa).

Residues G87, G89, R90, K110, D122, G123, R173, and R180 each contribute to the ATP site. The active-site Proton acceptor is D249. Residues N250 and D259 each contribute to the Mg(2+) site. ATP is bound at residue D259.

The protein belongs to the SELO family. Mg(2+) is required as a cofactor. The cofactor is Mn(2+).

It catalyses the reaction L-seryl-[protein] + ATP = 3-O-(5'-adenylyl)-L-seryl-[protein] + diphosphate. The catalysed reaction is L-threonyl-[protein] + ATP = 3-O-(5'-adenylyl)-L-threonyl-[protein] + diphosphate. It carries out the reaction L-tyrosyl-[protein] + ATP = O-(5'-adenylyl)-L-tyrosyl-[protein] + diphosphate. The enzyme catalyses L-histidyl-[protein] + UTP = N(tele)-(5'-uridylyl)-L-histidyl-[protein] + diphosphate. It catalyses the reaction L-seryl-[protein] + UTP = O-(5'-uridylyl)-L-seryl-[protein] + diphosphate. The catalysed reaction is L-tyrosyl-[protein] + UTP = O-(5'-uridylyl)-L-tyrosyl-[protein] + diphosphate. Functionally, nucleotidyltransferase involved in the post-translational modification of proteins. It can catalyze the addition of adenosine monophosphate (AMP) or uridine monophosphate (UMP) to a protein, resulting in modifications known as AMPylation and UMPylation. This chain is Protein nucleotidyltransferase YdiU, found in Pelagibacter ubique (strain HTCC1062).